A 349-amino-acid chain; its full sequence is MGDMGDPPKKKRLISLCVGCGNQIHDQYILRVSPDLEWHAACLKCAECNQYLDESCTCFVRDGKTYCKRDYIRLYGIKCAKCNIGFSKNDFVMRARSKVYHIECFRCVACSRQLIPGDEFALREDGLFCRADHDVVERATMGAGDPLSPLHPARPLQMAAEPISARQPALRPHVHKQPEKTTRVRTVLNEKQLHTLRTCYNANPRPDALMKEQLVEMTGLSPRVIRVWFQNKRCKDKKRSILMKQLQQQQPNDKTNIQGMTGTPMVATSPERHDGGLQANQVEVQSYQPPWKVLSDFALQSDIDQPAFQQLVNFSEGGPGSNSTGSEVASMSSQLPDTPNSMVASPIEA.

2 consecutive LIM zinc-binding domains span residues 17 to 70 (CVGC…CKRD) and 79 to 133 (CAKC…RADH). Positions 181–240 (TTRVRTVLNEKQLHTLRTCYNANPRPDALMKEQLVEMTGLSPRVIRVWFQNKRCKDKKRS) form a DNA-binding region, homeobox. The segment at 312–349 (VNFSEGGPGSNSTGSEVASMSSQLPDTPNSMVASPIEA) is disordered. The span at 321 to 343 (SNSTGSEVASMSSQLPDTPNSMV) shows a compositional bias: polar residues.

It is found in the nucleus. DNA-binding transcriptional activator. Recognizes and binds to the consensus octamer binding site 5'-ATAATTAA-3' in promoter of target genes. Plays a fundamental role in the gene regulatory network essential for retinal ganglion cell (RGC) differentiation. May be involved in subtype specialization of primary motoneurons. May bind to insulin gene enhancer sequences. Essential for heart development. The chain is Insulin gene enhancer protein isl-1 (isl1) from Danio rerio (Zebrafish).